A 355-amino-acid chain; its full sequence is Guanine nucleotide-binding protein subunit beta-5a (355 aa).

A disordered region spans residues methionine 1–threonine 23. WD repeat units lie at residues glycine 63–alanine 102, methionine 105–leucine 144, methionine 153–histidine 194, glycine 195–glutamate 238, serine 239–isoleucine 278, serine 280–isoleucine 322, and glycine 325–alanine 355.

This sequence belongs to the WD repeat G protein beta family. In terms of assembly, may interact with RGS9; this interaction stabilizes both proteins and increases RGS9 GTPase-activating protein (GAP) activity, hence accelerating the deactivation of D(2) dopamine receptor-mediated signaling.

The protein resides in the membrane. Enhances GTPase-activating protein (GAP) activity of regulator of G protein signaling (RGS) proteins, such as RGS7 and RGS9, hence involved in the termination of the signaling initiated by the G protein coupled receptors (GPCRs) by accelerating the GTP hydrolysis on the G-alpha subunits, thereby promoting their inactivation. Increases RGS7 GTPase-activating protein (GAP) activity, thereby regulating mood and cognition. Increases RGS9 GTPase-activating protein (GAP) activity, hence contributes to the deactivation of G protein signaling initiated by D(2) dopamine receptors. Along with gnb5b, plays an important role in neuronal signaling, including in the parasympathetic, but not sympathetic, control of heart rate. The polypeptide is Guanine nucleotide-binding protein subunit beta-5a (Danio rerio (Zebrafish)).